Consider the following 90-residue polypeptide: MARMVQCIKLNKEAEGLDFPPLPGELGKKIWQSVSKEAWAGWLKHQTMLINENRLNMADARARQYLLKQTEKYFFGEGADEAAGYVPPQA.

It belongs to the Fe(2+)-trafficking protein family.

Functionally, could be a mediator in iron transactions between iron acquisition and iron-requiring processes, such as synthesis and/or repair of Fe-S clusters in biosynthetic enzymes. The sequence is that of Probable Fe(2+)-trafficking protein from Cupriavidus pinatubonensis (strain JMP 134 / LMG 1197) (Cupriavidus necator (strain JMP 134)).